Here is a 740-residue protein sequence, read N- to C-terminus: Ribosome-releasing factor 2, mitochondrial (740 aa).

Residues 1-29 constitute a mitochondrion transit peptide; the sequence is MLKYAWQSGPKQSNRWLWHLSNQIWKRSY. One can recognise a tr-type G domain in the interval 31 to 310; it reads SKIRNIGILA…AVNAYLPAPE (280 aa). GTP contacts are provided by residues 40-47, 104-108, and 158-161; these read AHIDAGKT, DTPGH, and NKMD.

Belongs to the TRAFAC class translation factor GTPase superfamily. Classic translation factor GTPase family. EF-G/EF-2 subfamily.

It is found in the mitochondrion. In terms of biological role, mitochondrial GTPase that mediates the disassembly of ribosomes from messenger RNA at the termination of mitochondrial protein biosynthesis. Not involved in the GTP-dependent ribosomal translocation step during translation elongation. The sequence is that of Ribosome-releasing factor 2, mitochondrial from Drosophila melanogaster (Fruit fly).